The primary structure comprises 217 residues: L-lactate dehydrogenase B chain (217 aa).

Asn22 contributes to the NAD(+) binding site. Substrate-binding residues include Asn22 and Arg53. Residue His77 is the Proton acceptor of the active site. Tyr123 carries the phosphotyrosine modification. Thr132 serves as a coordination point for substrate. N6-acetyllysine is present on Lys212.

This sequence belongs to the LDH/MDH superfamily. LDH family. Homotetramer. Interacts with PTEN upstream reading frame protein MP31; the interaction leads to inhibition of mitochondrial lactate dehydrogenase activity, preventing conversion of lactate to pyruvate in mitochondria.

It localises to the cytoplasm. Its subcellular location is the mitochondrion inner membrane. The enzyme catalyses (S)-lactate + NAD(+) = pyruvate + NADH + H(+). It participates in fermentation; pyruvate fermentation to lactate; (S)-lactate from pyruvate: step 1/1. Interconverts simultaneously and stereospecifically pyruvate and lactate with concomitant interconversion of NADH and NAD(+). This is L-lactate dehydrogenase B chain (LDHB) from Oryctolagus cuniculus (Rabbit).